The primary structure comprises 180 residues: tRNA (cytidine(56)-2'-O)-methyltransferase (180 aa).

Residues Leu-84 and 112 to 116 (GAEKV) contribute to the S-adenosyl-L-methionine site.

This sequence belongs to the aTrm56 family. In terms of assembly, homodimer.

The protein localises to the cytoplasm. It carries out the reaction cytidine(56) in tRNA + S-adenosyl-L-methionine = 2'-O-methylcytidine(56) in tRNA + S-adenosyl-L-homocysteine + H(+). In terms of biological role, specifically catalyzes the AdoMet-dependent 2'-O-ribose methylation of cytidine at position 56 in tRNAs. The sequence is that of tRNA (cytidine(56)-2'-O)-methyltransferase from Natronomonas pharaonis (strain ATCC 35678 / DSM 2160 / CIP 103997 / JCM 8858 / NBRC 14720 / NCIMB 2260 / Gabara) (Halobacterium pharaonis).